Reading from the N-terminus, the 239-residue chain is Increased recombination centers protein 22-2 (239 aa).

The N-terminal stretch at 1–19 is a signal peptide; it reads MKLSTIFTAFAATIATVAG. Over 20–161 the chain is Lumenal; the sequence is YETTGSKQTV…AAVSFFDPRL (142 aa). A helical membrane pass occupies residues 162–182; it reads IFLELVLLITFAGLIYVGYEI. Residues 183 to 239 lie on the Cytoplasmic side of the membrane; the sequence is WGKQYFKGVAPVKAKKVSAAKASSPVASGPSTTSATGYDTNWIPESHLKQKKTKKVN. Positions 201–213 are enriched in low complexity; the sequence is AAKASSPVASGPS. The segment at 201–222 is disordered; that stretch reads AAKASSPVASGPSTTSATGYDT.

It belongs to the IRC22 family.

It localises to the endoplasmic reticulum membrane. Is probably involved in a pathway contributing to genomic integrity. The sequence is that of Increased recombination centers protein 22-2 (IRC22-2) from Candida albicans (strain WO-1) (Yeast).